The primary structure comprises 357 residues: Probable cinnamyl alcohol dehydrogenase 1 (357 aa).

Cys-47 contacts Zn(2+). Thr-49 serves as a coordination point for NADP(+). Residues His-69, Glu-70, Cys-100, Cys-103, Cys-106, Cys-114, and Cys-163 each contribute to the Zn(2+) site. NADP(+)-binding positions include Thr-167, 188–193 (GLGGVG), 211–216 (SSSNKK), Thr-251, Gly-275, and 298–300 (SFI).

Belongs to the zinc-containing alcohol dehydrogenase family. Homodimer. The cofactor is Zn(2+). Post-translationally, the N-terminus is blocked.

It catalyses the reaction (E)-cinnamyl alcohol + NADP(+) = (E)-cinnamaldehyde + NADPH + H(+). The enzyme catalyses (E)-coniferol + NADP(+) = (E)-coniferaldehyde + NADPH + H(+). It carries out the reaction (E)-sinapyl alcohol + NADP(+) = (E)-sinapaldehyde + NADPH + H(+). The catalysed reaction is (E)-4-coumaroyl alcohol + NADP(+) = (E)-4-coumaraldehyde + NADPH + H(+). It catalyses the reaction (E)-caffeyl alcohol + NADP(+) = (E)-caffeyl aldehyde + NADPH + H(+). It functions in the pathway aromatic compound metabolism; phenylpropanoid biosynthesis. Functionally, involved in lignin biosynthesis. Catalyzes the final step specific for the production of lignin monomers. Catalyzes the NADPH-dependent reduction of coniferaldehyde, 5-hydroxyconiferaldehyde, sinapaldehyde, 4-coumaraldehyde and caffeyl aldehyde to their respective alcohols. The sequence is that of Probable cinnamyl alcohol dehydrogenase 1 from Nicotiana tabacum (Common tobacco).